A 184-amino-acid polypeptide reads, in one-letter code: uncharacterized protein (184 aa).

Residues 1–20 (MTLRKILALTCLLLPMMASA) form the signal peptide.

This sequence to H.influenzae HI_0045.

It is found in the periplasm. This is an uncharacterized protein from Escherichia coli (strain K12).